We begin with the raw amino-acid sequence, 141 residues long: Cystatin-SA (141 aa).

Positions 1–20 (MAWPLCTLLLLLATQAVALA) are cleaved as a signal peptide. The Secondary area of contact signature appears at 76–80 (QIVGG). Cystine bridges form between cysteine 94–cysteine 104 and cysteine 118–cysteine 138.

In terms of tissue distribution, expressed in submandibular and sublingual saliva but not in parotid saliva (at protein level). Expressed in submandibular gland and parotid gland.

It is found in the secreted. Thiol protease inhibitor. This chain is Cystatin-SA (CST2), found in Homo sapiens (Human).